We begin with the raw amino-acid sequence, 555 residues long: CTP synthase (555 aa).

Residues Met1–Ile271 form an amidoligase domain region. Ser19 contributes to the CTP binding site. Ser19 contributes to the UTP binding site. ATP is bound by residues Ser20–Leu25 and Asp77. Positions 77 and 145 each coordinate Mg(2+). Residues Asp152–Glu154, Lys192–Gln197, and Lys228 contribute to the CTP site. UTP-binding positions include Lys192–Gln197 and Lys228. Positions Arg297–Ala537 constitute a Glutamine amidotransferase type-1 domain. Gly358 is an L-glutamine binding site. Residue Cys385 is the Nucleophile; for glutamine hydrolysis of the active site. Residues Leu386 to Gln389, Glu409, and Arg466 each bind L-glutamine. Catalysis depends on residues His510 and Glu512. The tract at residues Asp536–Gly555 is disordered.

The protein belongs to the CTP synthase family. In terms of assembly, homotetramer.

It carries out the reaction UTP + L-glutamine + ATP + H2O = CTP + L-glutamate + ADP + phosphate + 2 H(+). The catalysed reaction is L-glutamine + H2O = L-glutamate + NH4(+). The enzyme catalyses UTP + NH4(+) + ATP = CTP + ADP + phosphate + 2 H(+). It participates in pyrimidine metabolism; CTP biosynthesis via de novo pathway; CTP from UDP: step 2/2. Its activity is regulated as follows. Allosterically activated by GTP, when glutamine is the substrate; GTP has no effect on the reaction when ammonia is the substrate. The allosteric effector GTP functions by stabilizing the protein conformation that binds the tetrahedral intermediate(s) formed during glutamine hydrolysis. Inhibited by the product CTP, via allosteric rather than competitive inhibition. In terms of biological role, catalyzes the ATP-dependent amination of UTP to CTP with either L-glutamine or ammonia as the source of nitrogen. Regulates intracellular CTP levels through interactions with the four ribonucleotide triphosphates. This is CTP synthase from Anaeromyxobacter dehalogenans (strain 2CP-C).